Consider the following 119-residue polypeptide: MARVKRGVEARRRHKKVLKAAKGYYGARSRVFRVAKQAVIKAGQYAYRDRRVKKRNFRALWITRINAQSRAEGLTYSQLIAGLKKASIVLDRRVLADLAVYDKAAFAAVVAKAKSALAA.

This sequence belongs to the bacterial ribosomal protein bL20 family.

Its function is as follows. Binds directly to 23S ribosomal RNA and is necessary for the in vitro assembly process of the 50S ribosomal subunit. It is not involved in the protein synthesizing functions of that subunit. This Cellvibrio japonicus (strain Ueda107) (Pseudomonas fluorescens subsp. cellulosa) protein is Large ribosomal subunit protein bL20.